Reading from the N-terminus, the 771-residue chain is Transcription factor TAS2 (771 aa).

Positions 33-53 (RSRAESASGPQQPSRRQPQTS) are disordered. The segment covering 42 to 51 (PQQPSRRQPQ) has biased composition (low complexity). A DNA-binding region (zn(2)-C6 fungal-type) is located at residues 54-80 (CDLCRSRKIKCDRGTPCGNCRTRGLAC). The interval 125 to 150 (AVGGSGNAENGAHGDATPRVPLSGLE) is disordered.

The protein resides in the nucleus. Its function is as follows. Transcription factor; part of the gene cluster that mediates the biosynthesis of the toxin tenuazonic acid (TeA), an inhibitor of protein biosynthesis on ribosomes by suppressing the release of new protein. Directly regulates the expression of the hybrid PKS-NRPS synthetase TAS1 and the subsequent production of TeA. The protein is Transcription factor TAS2 of Pyricularia oryzae (strain 70-15 / ATCC MYA-4617 / FGSC 8958) (Rice blast fungus).